A 232-amino-acid polypeptide reads, in one-letter code: Phosphatidylserine decarboxylase proenzyme (232 aa).

Ser190 (schiff-base intermediate with substrate; via pyruvic acid) is an active-site residue. Ser190 bears the Pyruvic acid (Ser); by autocatalysis mark.

This sequence belongs to the phosphatidylserine decarboxylase family. PSD-A subfamily. Heterodimer of a large membrane-associated beta subunit and a small pyruvoyl-containing alpha subunit. Pyruvate serves as cofactor. In terms of processing, is synthesized initially as an inactive proenzyme. Formation of the active enzyme involves a self-maturation process in which the active site pyruvoyl group is generated from an internal serine residue via an autocatalytic post-translational modification. Two non-identical subunits are generated from the proenzyme in this reaction, and the pyruvate is formed at the N-terminus of the alpha chain, which is derived from the carboxyl end of the proenzyme. The post-translation cleavage follows an unusual pathway, termed non-hydrolytic serinolysis, in which the side chain hydroxyl group of the serine supplies its oxygen atom to form the C-terminus of the beta chain, while the remainder of the serine residue undergoes an oxidative deamination to produce ammonia and the pyruvoyl prosthetic group on the alpha chain.

Its subcellular location is the cell membrane. The enzyme catalyses a 1,2-diacyl-sn-glycero-3-phospho-L-serine + H(+) = a 1,2-diacyl-sn-glycero-3-phosphoethanolamine + CO2. It functions in the pathway phospholipid metabolism; phosphatidylethanolamine biosynthesis; phosphatidylethanolamine from CDP-diacylglycerol: step 2/2. Functionally, catalyzes the formation of phosphatidylethanolamine (PtdEtn) from phosphatidylserine (PtdSer). This is Phosphatidylserine decarboxylase proenzyme from Rhodopseudomonas palustris (strain BisB18).